The chain runs to 861 residues: Leucine--tRNA ligase (861 aa).

Positions 43–53 (PYPSGKLHMGH) match the 'HIGH' region motif. The 'KMSKS' region motif lies at 588–592 (KMSKS). Lysine 591 is a binding site for ATP.

It belongs to the class-I aminoacyl-tRNA synthetase family.

The protein resides in the cytoplasm. It catalyses the reaction tRNA(Leu) + L-leucine + ATP = L-leucyl-tRNA(Leu) + AMP + diphosphate. The polypeptide is Leucine--tRNA ligase (Symbiobacterium thermophilum (strain DSM 24528 / JCM 14929 / IAM 14863 / T)).